The chain runs to 106 residues: Phosphoribosyl-ATP pyrophosphatase (106 aa).

The protein belongs to the PRA-PH family.

Its subcellular location is the cytoplasm. It catalyses the reaction 1-(5-phospho-beta-D-ribosyl)-ATP + H2O = 1-(5-phospho-beta-D-ribosyl)-5'-AMP + diphosphate + H(+). It participates in amino-acid biosynthesis; L-histidine biosynthesis; L-histidine from 5-phospho-alpha-D-ribose 1-diphosphate: step 2/9. The sequence is that of Phosphoribosyl-ATP pyrophosphatase from Lactiplantibacillus plantarum (strain ATCC BAA-793 / NCIMB 8826 / WCFS1) (Lactobacillus plantarum).